Here is a 63-residue protein sequence, read N- to C-terminus: 2-hydroxymuconate tautomerase (63 aa).

P2 functions as the Proton acceptor; via imino nitrogen in the catalytic mechanism.

The protein belongs to the 4-oxalocrotonate tautomerase family. In terms of assembly, homohexamer.

The enzyme catalyses (2Z,4E)-2-hydroxyhexa-2,4-dienedioate = (3E)-2-oxohex-3-enedioate. Its pathway is aromatic compound metabolism; salicylate degradation. In terms of biological role, catalyzes the ketonization of 2-hydroxymuconate stereoselectively to yield 2-oxo-3-hexenedioate. The protein is 2-hydroxymuconate tautomerase (nahJ) of Stutzerimonas stutzeri (Pseudomonas stutzeri).